The primary structure comprises 299 residues: Elongation factor Ts (299 aa).

The interval 82 to 85 (TDFV) is involved in Mg(2+) ion dislocation from EF-Tu.

This sequence belongs to the EF-Ts family.

It is found in the cytoplasm. Associates with the EF-Tu.GDP complex and induces the exchange of GDP to GTP. It remains bound to the aminoacyl-tRNA.EF-Tu.GTP complex up to the GTP hydrolysis stage on the ribosome. The protein is Elongation factor Ts of Dechloromonas aromatica (strain RCB).